The sequence spans 129 residues: Small ribosomal subunit protein bS18c (129 aa).

Residues Met1–Lys20 are disordered.

It belongs to the bacterial ribosomal protein bS18 family. As to quaternary structure, part of the 30S ribosomal subunit.

The protein localises to the plastid. The protein resides in the chloroplast. The chain is Small ribosomal subunit protein bS18c from Stigeoclonium helveticum (Green alga).